The primary structure comprises 471 residues: Trehalose-binding lipoprotein LpqY (471 aa).

A signal peptide spans 1–28; sequence MDGRQVVRARRWCATAAVALMTASTVAA. Cys-29 carries the N-palmitoyl cysteine lipid modification. The S-diacylglycerol cysteine moiety is linked to residue Cys-29. Alpha,alpha-trehalose is bound by residues Asn-45, Glu-46, Gln-79, Asp-100, Asn-154, Tyr-198, Trp-279, Tyr-281, Gly-354, and Arg-424. A disulfide bridge links Cys-57 with Cys-375.

Belongs to the bacterial solute-binding protein 1 family. As to quaternary structure, monomer. The complex is composed of two ATP-binding proteins (SugC), two transmembrane proteins (SugA and SugB) and a solute-binding protein (LpqY).

It is found in the cell inner membrane. Functionally, part of the ABC transporter complex LpqY-SugA-SugB-SugC, which is highly specific for uptake of trehalose. Involved in the recycling of extracellular trehalose released from trehalose-containing molecules synthesized by M.thermoresistibile. Trehalose uptake is essential for virulence. Binds deuterated trehalose with similar high affinity to trehalose, trehalose analogs including galactotrehalose, 4-azido-4-deoxy-trehalose, 6-azido-6-deoxy-trehalose, 3-azido-3-deoxy-trehalose and mannotrehalose in the order of decreasing affinity, respectively, and 2-azido-2-deoxy-trehalose and kojibiose (alpha1,2-glycosidic bond) with very low affinity. Does not recognize single glucose, 6-amino-6-deoxy-trehalose, trehalose-6-phosphate, nigerose (alpha1,3-glycosidic bond), maltose (alpha1,4-glycosidic bond), isomaltose (alpha1,6-glycosidic bond) or glycerophosphocholine. Decreased recognition of alpha,beta-trehalose and almost no recognition of beta,beta-trehalose. Substrate specificity indicates a strict requirement for an alpha1,1-linked disaccharide. The protein is Trehalose-binding lipoprotein LpqY of Mycolicibacterium thermoresistibile (strain ATCC 19527 / DSM 44167 / CIP 105390 / JCM 6362 / NCTC 10409 / 316) (Mycobacterium thermoresistibile).